Reading from the N-terminus, the 74-residue chain is Exodeoxyribonuclease 7 small subunit (74 aa).

Belongs to the XseB family. Heterooligomer composed of large and small subunits.

The protein localises to the cytoplasm. The catalysed reaction is Exonucleolytic cleavage in either 5'- to 3'- or 3'- to 5'-direction to yield nucleoside 5'-phosphates.. Functionally, bidirectionally degrades single-stranded DNA into large acid-insoluble oligonucleotides, which are then degraded further into small acid-soluble oligonucleotides. This chain is Exodeoxyribonuclease 7 small subunit, found in Synechococcus elongatus (strain ATCC 33912 / PCC 7942 / FACHB-805) (Anacystis nidulans R2).